A 971-amino-acid chain; its full sequence is Nucleolar protein dao-5 (971 aa).

Disordered regions lie at residues Arg61–Gln926 and Lys938–Asp971. Positions Lys134–Asp150 are enriched in low complexity. The segment covering Ser180–Asp190 has biased composition (acidic residues). 17 stretches are compositionally biased toward low complexity: residues Ala264 to Pro275, Lys294 to Pro304, Ala324 to Pro335, Ala355 to Pro366, Ala386 to Pro397, Ala417 to Pro428, Lys447 to Pro457, Ala476 to Asp498, Ala508 to Pro519, Ala539 to Pro550, Lys569 to Pro579, Ala598 to Asp620, Ala630 to Pro641, Lys691 to Asp712, Ala751 to Gln761, Lys780 to Thr791, and Ala815 to Thr825. Over residues Ser907–Phe921 the composition is skewed to basic and acidic residues. Positions Ala939 to Gly950 are enriched in basic residues. Residues Ile957–Asp971 show a composition bias toward polar residues.

Belongs to the NOLC1 family. As to quaternary structure, may form dimers. Interacts with RNA polymerase I. As to expression, expressed in the nerve ring and hypodermal tissues. Expressed in the intestine. Expressed in the germline.

It is found in the nucleus. The protein resides in the nucleolus. It localises to the nucleoplasm. In terms of biological role, nucleolar protein which binds to RNA polymerase I and rDNA and is required for efficient RNA polymerase I-mediated rDNA transcription. Maintains the epigenetically active status of rDNA chromatin which facilitates rDNA transcription and sustains germline development, ensuring fertility. Plays a role in the modulation of nucleolus size. May play a role in the regulation of lifespan. In Caenorhabditis elegans, this protein is Nucleolar protein dao-5.